Here is a 167-residue protein sequence, read N- to C-terminus: Bacterioferritin (167 aa).

One can recognise a Ferritin-like diiron domain in the interval 1–145 (MQGDPEVIEF…TQLDLIEKLG (145 aa)). Fe cation-binding residues include Glu-18 and Glu-51. Met-52 is a binding site for heme b. Fe cation-binding residues include His-54, Glu-94, Glu-127, and His-130.

This sequence belongs to the bacterioferritin family. Homooligomer of 24 subunits, arranged as 12 dimers, that are packed together to form an approximately spherical molecule with a central cavity, in which large amounts of iron can be deposited. Heme b serves as cofactor.

The enzyme catalyses 4 Fe(2+) + O2 + 4 H(+) = 4 Fe(3+) + 2 H2O. It catalyses the reaction Fe(2+)(in) = Fe(2+)(out). Functionally, iron-storage protein, whose ferroxidase center binds Fe(2+), oxidizes it using dioxygen to Fe(3+), and participates in the subsequent Fe(3+) oxide mineral core formation within the central cavity of the BFR protein shell. This chain is Bacterioferritin (bfr), found in Streptomyces coelicolor (strain ATCC BAA-471 / A3(2) / M145).